The following is a 55-amino-acid chain: Large ribosomal subunit protein bL33 (55 aa).

The protein belongs to the bacterial ribosomal protein bL33 family.

The sequence is that of Large ribosomal subunit protein bL33 from Alcanivorax borkumensis (strain ATCC 700651 / DSM 11573 / NCIMB 13689 / SK2).